The chain runs to 321 residues: Probable pectate lyase A (321 aa).

The N-terminal stretch at 1 to 18 (MKFVATLIACGLSGLALA) is a signal peptide. A glycan (N-linked (GlcNAc...) asparagine) is linked at Asn93. Ca(2+)-binding residues include Asp134, Asp163, and Asp167. Arg220 is an active-site residue. The N-linked (GlcNAc...) asparagine glycan is linked to Asn238.

Belongs to the polysaccharide lyase 1 family. Ca(2+) serves as cofactor.

Its subcellular location is the secreted. The catalysed reaction is Eliminative cleavage of (1-&gt;4)-alpha-D-galacturonan to give oligosaccharides with 4-deoxy-alpha-D-galact-4-enuronosyl groups at their non-reducing ends.. Functionally, pectinolytic enzyme consist of four classes of enzymes: pectin lyase, polygalacturonase, pectin methylesterase and rhamnogalacturonase. Among pectinolytic enzymes, pectin lyase is the most important in depolymerization of pectin, since it cleaves internal glycosidic bonds of highly methylated pectins. Favors pectate, the anion, over pectin, the methyl ester. The polypeptide is Probable pectate lyase A (plyA) (Aspergillus fumigatus (strain ATCC MYA-4609 / CBS 101355 / FGSC A1100 / Af293) (Neosartorya fumigata)).